Reading from the N-terminus, the 484-residue chain is Phosphomevalonate kinase erg8 (484 aa).

A disordered region spans residues 54-77 (REAASGSAHGRSDTPQAEGNVHGD). Residue 184–194 (AHKTGLGSSAA) coordinates ATP.

The protein belongs to the GHMP kinase family. Mevalonate kinase subfamily.

The catalysed reaction is (R)-5-phosphomevalonate + ATP = (R)-5-diphosphomevalonate + ADP. It participates in isoprenoid biosynthesis; isopentenyl diphosphate biosynthesis via mevalonate pathway; isopentenyl diphosphate from (R)-mevalonate: step 2/3. Phosphomevalonate kinase; part of the second module of ergosterol biosynthesis pathway that includes the middle steps of the pathway. Erg8 converts 5-phosphomevalonate to 5-diphosphomevalonate. The second module is carried out in the vacuole and involves the formation of farnesyl diphosphate, which is also an important intermediate in the biosynthesis of ubiquinone, dolichol, heme and prenylated proteins. Activity by the mevalonate kinase erg12 (AFUA_4G07780) first converts mevalonate into 5-phosphomevalonate. 5-phosphomevalonate is then further converted to 5-diphosphomevalonate by the phosphomevalonate kinase erg8 (AFUA_5G10680). The diphosphomevalonate decarboxylase mvd1 (AFUA_4G07130) then produces isopentenyl diphosphate. The isopentenyl-diphosphate delta-isomerase idi1 (AFUA_6G11160) then catalyzes the 1,3-allylic rearrangement of the homoallylic substrate isopentenyl (IPP) to its highly electrophilic allylic isomer, dimethylallyl diphosphate (DMAPP). Finally the farnesyl diphosphate synthase erg20 (AFUA_5G02450) catalyzes the sequential condensation of isopentenyl pyrophosphate with dimethylallyl pyrophosphate, and then with the resultant geranylpyrophosphate to the ultimate product farnesyl pyrophosphate. The protein is Phosphomevalonate kinase erg8 of Aspergillus fumigatus (strain ATCC MYA-4609 / CBS 101355 / FGSC A1100 / Af293) (Neosartorya fumigata).